We begin with the raw amino-acid sequence, 156 residues long: UPF0587 protein (156 aa).

The Zn(2+) site is built by Cys-32, Cys-35, Cys-64, and Cys-67.

It belongs to the UPF0587 family.

This Dictyostelium discoideum (Social amoeba) protein is UPF0587 protein.